A 126-amino-acid chain; its full sequence is Profilin-2 (126 aa).

Residue S2 is modified to Blocked amino end (Ser). Position 104 is an N6,N6,N6-trimethyllysine (K104).

The protein belongs to the profilin family. As to quaternary structure, occurs in many kinds of cells as a complex with monomeric actin in a 1:1 ratio.

The protein localises to the cytoplasm. The protein resides in the cytoskeleton. Functionally, binds to actin and affects the structure of the cytoskeleton. At high concentrations, profilin prevents the polymerization of actin, whereas it enhances it at low concentrations. By binding to PIP2, it inhibits the formation of IP3 and DG. The polypeptide is Profilin-2 (Acanthamoeba castellanii (Amoeba)).